The chain runs to 1408 residues: ABC transporter B family member 20 (1408 aa).

The segment at 14 to 49 is disordered; that stretch reads HMQPLTPVSEVSEPPESPSPYLDPGAESGGGTGTAA. The segment covering 20–39 has biased composition (low complexity); sequence PVSEVSEPPESPSPYLDPGA. Residues 86 to 106 traverse the membrane as a helical segment; the sequence is VLMIVGSVAAAAHGTALIVYL. One can recognise an ABC transmembrane type-1 1 domain in the interval 88–381; it reads MIVGSVAAAA…AATNFYSFDQ (294 aa). N120 carries N-linked (GlcNAc...) asparagine glycosylation. 3 helical membrane-spanning segments follow: residues 141 to 161, 214 to 233, and 238 to 260; these read IVYIAGGVFISGWIEVSCWIL, VGNYIHNMATFISGLVIGFV, and IALITLATGPFIVAAGGISNIFL. A glycan (N-linked (GlcNAc...) asparagine) is linked at N293. Helical transmembrane passes span 312 to 332 and 353 to 373; these read GILISLVQGLGLGFTYGLAIC and GEIIAALFAVILSGLGLNQAA. Positions 414-649 constitute an ABC transporter 1 domain; the sequence is IEFRNVYFSY…GGLYAELLKC (236 aa). 449–456 is an ATP binding site; sequence GRNGSGKS. N451 is a glycosylation site (N-linked (GlcNAc...) asparagine). Disordered regions lie at residues 676-735 and 752-816; these read SSAG…SLDC and LPHL…DAQH. Over residues 762–771 the composition is skewed to polar residues; sequence CPQQKSNGSE. Residue N768 is glycosylated (N-linked (GlcNAc...) asparagine). Over residues 802–816 the composition is skewed to basic and acidic residues; that stretch reads DDTKANGKASKDAQH. The 289-residue stretch at 836-1124 folds into the ABC transmembrane type-1 2 domain; the sequence is AVLGSLGAAI…PFGLAPYILK (289 aa). 6 helical membrane-spanning segments follow: residues 841–861, 881–901, 959–979, 983–1003, 1062–1082, and 1103–1123; these read LGAAIFGSFNPLLAYVIALVV, LIIACMGIVTVVANFLQHFYF, IFIQDSFAVIVALLIGLLLGW, LVALATLPILTLSAIAQKLWL, IGFAFGFSQFLLFACNALLLW, and MVFSFATFALVEPFGLAPYIL. The ABC transporter 2 domain maps to 1159 to 1396; it reads IELKNVDFCY…NGLYVRLMQP (238 aa). N1179 carries N-linked (GlcNAc...) asparagine glycosylation. Position 1194-1201 (1194-1201) interacts with ATP; sequence GVSGSGKS. Residues N1261 and N1347 are each glycosylated (N-linked (GlcNAc...) asparagine).

The protein belongs to the ABC transporter superfamily. ABCB family. Multidrug resistance exporter (TC 3.A.1.201) subfamily. Expressed in aerial tissues.

It localises to the membrane. The enzyme catalyses (indol-3-yl)acetate(in) + ATP + H2O = (indol-3-yl)acetate(out) + ADP + phosphate + H(+). In terms of biological role, probable auxin efflux transporter that contributes, together with ABCB6 and in a FKBP42/TWD1-dependent manner, to the regulation of leaf position and morphology, internode distribution, roots development, and inflorescence organization, probably by modulating auxin repartition. In Arabidopsis thaliana (Mouse-ear cress), this protein is ABC transporter B family member 20.